The following is a 317-amino-acid chain: Ribosomal RNA small subunit methyltransferase H (317 aa).

S-adenosyl-L-methionine contacts are provided by residues 39–41 (GGH), Asp59, Phe83, Asp104, and Gln111.

Belongs to the methyltransferase superfamily. RsmH family.

The protein localises to the cytoplasm. It carries out the reaction cytidine(1402) in 16S rRNA + S-adenosyl-L-methionine = N(4)-methylcytidine(1402) in 16S rRNA + S-adenosyl-L-homocysteine + H(+). In terms of biological role, specifically methylates the N4 position of cytidine in position 1402 (C1402) of 16S rRNA. The polypeptide is Ribosomal RNA small subunit methyltransferase H (Paraburkholderia xenovorans (strain LB400)).